A 206-amino-acid chain; its full sequence is Large ribosomal subunit protein mL40 (206 aa).

Residues 1-46 (MATAAMLCAARALRPRSWIPGTCQAQVRHTHQRASLLSFWELIPMR) constitute a mitochondrion transit peptide. The segment at 170 to 190 (PFEKEGPHYTPPVPNYQAPEG) is disordered.

This sequence belongs to the mitochondrion-specific ribosomal protein mL40 family. In terms of assembly, component of the mitochondrial ribosome large subunit (39S) which comprises a 16S rRNA and about 50 distinct proteins.

The protein resides in the mitochondrion. This Rattus norvegicus (Rat) protein is Large ribosomal subunit protein mL40 (Mrpl40).